A 581-amino-acid polypeptide reads, in one-letter code: Moesin/ezrin/radixin homolog 1 (581 aa).

One can recognise an FERM domain in the interval 8–298 (MNVRVTTMDA…GNHELYMRRR (291 aa)). The interval 452–519 (QVAKGSRAAA…EERRTLAERN (68 aa)) is disordered. Over residues 459–469 (AAAALQAATTT) the composition is skewed to low complexity. Acidic residues predominate over residues 477 to 486 (EEEENEEELI). The span at 495 to 519 (FSKDFDTDEHIKDPVEERRTLAERN) shows a compositional bias: basic and acidic residues. T562 carries the phosphothreonine modification.

Interacts with cytoskeletal actin.

It localises to the cell junction. It is found in the adherens junction. Its subcellular location is the cell projection. The protein resides in the microvillus. The protein localises to the rhabdomere. It localises to the cell membrane. It is found in the cytoplasm. Its subcellular location is the cytoskeleton. Functionally, involved in connections of major cytoskeletal structures to the plasma membrane. In Anopheles gambiae (African malaria mosquito), this protein is Moesin/ezrin/radixin homolog 1.